A 71-amino-acid polypeptide reads, in one-letter code: DNA-directed RNA polymerase subunit omega (71 aa).

The protein belongs to the RNA polymerase subunit omega family. The RNAP catalytic core consists of 2 alpha, 1 beta, 1 beta' and 1 omega subunit. When a sigma factor is associated with the core the holoenzyme is formed, which can initiate transcription.

It carries out the reaction RNA(n) + a ribonucleoside 5'-triphosphate = RNA(n+1) + diphosphate. Functionally, promotes RNA polymerase assembly. Latches the N- and C-terminal regions of the beta' subunit thereby facilitating its interaction with the beta and alpha subunits. The sequence is that of DNA-directed RNA polymerase subunit omega from Campylobacter concisus (strain 13826).